The chain runs to 675 residues: Potassium-transporting ATPase ATP-binding subunit (675 aa).

4 helical membrane-spanning segments follow: residues 34–54 (IMFV…FPDI), 65–85 (LITI…SEAF), 216–236 (IALF…IVTL), and 245–265 (LILP…TTIG). D304 serves as the catalytic 4-aspartylphosphate intermediate. Residues D341, E345, 372-379 (FTAETRMS), and K390 each bind ATP. Residues D513 and D517 each coordinate Mg(2+). The next 3 helical transmembrane spans lie at 569-591 (ALTT…ALMM), 611-631 (AIIS…PIAM), and 644-664 (IFIN…FLGI).

Belongs to the cation transport ATPase (P-type) (TC 3.A.3) family. Type IA subfamily. As to quaternary structure, the system is composed of three essential subunits: KdpA, KdpB and KdpC.

The protein resides in the cell membrane. It catalyses the reaction K(+)(out) + ATP + H2O = K(+)(in) + ADP + phosphate + H(+). Functionally, part of the high-affinity ATP-driven potassium transport (or Kdp) system, which catalyzes the hydrolysis of ATP coupled with the electrogenic transport of potassium into the cytoplasm. This subunit is responsible for energy coupling to the transport system and for the release of the potassium ions to the cytoplasm. The sequence is that of Potassium-transporting ATPase ATP-binding subunit from Staphylococcus aureus (strain MSSA476).